The sequence spans 242 residues: Phosphoribosylaminoimidazole-succinocarboxamide synthase (242 aa).

It belongs to the SAICAR synthetase family.

The catalysed reaction is 5-amino-1-(5-phospho-D-ribosyl)imidazole-4-carboxylate + L-aspartate + ATP = (2S)-2-[5-amino-1-(5-phospho-beta-D-ribosyl)imidazole-4-carboxamido]succinate + ADP + phosphate + 2 H(+). The protein operates within purine metabolism; IMP biosynthesis via de novo pathway; 5-amino-1-(5-phospho-D-ribosyl)imidazole-4-carboxamide from 5-amino-1-(5-phospho-D-ribosyl)imidazole-4-carboxylate: step 1/2. This Ehrlichia chaffeensis (strain ATCC CRL-10679 / Arkansas) protein is Phosphoribosylaminoimidazole-succinocarboxamide synthase.